We begin with the raw amino-acid sequence, 188 residues long: Methionine aminopeptidase (188 aa).

Residue His-60 participates in substrate binding. A divalent metal cation is bound by residues Asp-80, Asp-91, and His-164. His-172 provides a ligand contact to substrate.

This sequence belongs to the peptidase M24A family. Methionine aminopeptidase archaeal type 2 subfamily. In terms of assembly, monomer. Co(2+) is required as a cofactor. Requires Zn(2+) as cofactor. The cofactor is Mn(2+). It depends on Fe(2+) as a cofactor.

The catalysed reaction is Release of N-terminal amino acids, preferentially methionine, from peptides and arylamides.. Functionally, removes the N-terminal methionine from nascent proteins. The N-terminal methionine is often cleaved when the second residue in the primary sequence is small and uncharged (Met-Ala-, Cys, Gly, Pro, Ser, Thr, or Val). This is Methionine aminopeptidase (map) from Methanothermus fervidus.